Here is a 327-residue protein sequence, read N- to C-terminus: BarH-like 1 homeobox protein (327 aa).

3 disordered regions span residues 1 to 90 (MEGS…AQSR), 113 to 181 (PYSS…PRKA), and 303 to 327 (LQGA…AQPR). Over residues 33-54 (RSPLELSPRSESSSDCSSPASP) the composition is skewed to low complexity. The span at 79-90 (QPGQLSAPAQSR) shows a compositional bias: polar residues. Composition is skewed to basic and acidic residues over residues 133 to 143 (AGEDFRDKLDK) and 152 to 166 (SEYK…EISS). The homeobox DNA-binding region spans 178 to 237 (PRKARTAFTDHQLAQLERSFERQKYLSVQDRMELAASLNLTDTQVKTWYQNRRTKWKRQT). Residues 308–318 (EPPPPLPPLPG) are compositionally biased toward pro residues.

It belongs to the BAR homeobox family.

The protein localises to the nucleus. This Mus musculus (Mouse) protein is BarH-like 1 homeobox protein (Barhl1).